The sequence spans 743 residues: Mitochondrial exoribonuclease DSS-1 (743 aa).

The transit peptide at 1 to 67 (MTPRRVAKLV…KELLHLQRSL (67 aa)) directs the protein to the mitochondrion. The region spanning 186–542 (THNPAYAIDS…VHHQLKVWLW (357 aa)) is the RNB domain. Positions 320 to 357 (VGNQHHHTERESTQASPAKREEGKKGMVASGGTSSCRP) are disordered. Residues 325-344 (HHTERESTQASPAKREEGKK) show a composition bias toward basic and acidic residues.

This sequence belongs to the RNR ribonuclease family. In terms of assembly, component of the mitochondrial 3' processome (MPsome) complex composed at least of terminal uridylyltransferase KRET1/TUT1, 3'-5' exonuclease DSS1, MPSS1, MPSS2 and MPSS3. Within the complex, interacts with KRET1 and MPSS2. Component of the mitochondrial degradosome complex composed at least of 3'-5' exonuclease DSS1 and helicase SUV3. Within the complex, interacts with helicase SUV3.

The protein resides in the mitochondrion. The enzyme catalyses Exonucleolytic cleavage in the 3'- to 5'-direction to yield nucleoside 5'-phosphates.. 3'-5'exoribonuclease which is involved in the post-transcriptional processing, editing and degradation of mitochondrial RNAs, including mRNAs, rRNAs and guided RNAs (gRNA). As part of the mitochondrial 3' processome (MPsome), involved in the maturation of guided RNA (gRNA) precursors by catalyzing the processive 3'-5' degradation of uridylated gRNA precursors. Plays a role in the degradation of 12S rRNA processing intermediates and maturation by-products. The chain is Mitochondrial exoribonuclease DSS-1 from Trypanosoma brucei brucei.